The following is a 379-amino-acid chain: 1-deoxy-D-xylulose 5-phosphate reductoisomerase (379 aa).

NADPH-binding residues include T10, G11, S12, I13, N39, and N121. K122 provides a ligand contact to 1-deoxy-D-xylulose 5-phosphate. Position 123 (E123) interacts with NADPH. Position 147 (D147) interacts with Mn(2+). 1-deoxy-D-xylulose 5-phosphate contacts are provided by S148, E149, S173, and H196. E149 contacts Mn(2+). Residue G202 participates in NADPH binding. 1-deoxy-D-xylulose 5-phosphate is bound by residues S209, N214, K215, and E218. Residue E218 coordinates Mn(2+).

Belongs to the DXR family. Mg(2+) is required as a cofactor. It depends on Mn(2+) as a cofactor.

It carries out the reaction 2-C-methyl-D-erythritol 4-phosphate + NADP(+) = 1-deoxy-D-xylulose 5-phosphate + NADPH + H(+). Its pathway is isoprenoid biosynthesis; isopentenyl diphosphate biosynthesis via DXP pathway; isopentenyl diphosphate from 1-deoxy-D-xylulose 5-phosphate: step 1/6. Functionally, catalyzes the NADPH-dependent rearrangement and reduction of 1-deoxy-D-xylulose-5-phosphate (DXP) to 2-C-methyl-D-erythritol 4-phosphate (MEP). In Chlamydia caviae (strain ATCC VR-813 / DSM 19441 / 03DC25 / GPIC) (Chlamydophila caviae), this protein is 1-deoxy-D-xylulose 5-phosphate reductoisomerase.